Reading from the N-terminus, the 326-residue chain is GDP-mannose transporter (326 aa).

The Cytoplasmic segment spans residues 1–4; sequence MEKS. The chain crosses the membrane as a helical span at residues 5 to 25; sequence ITNSPVLSILSYCAASILMTV. Residues 26–35 lie on the Lumenal side of the membrane; it reads TNKYVLSGTS. The chain crosses the membrane as a helical span at residues 36-56; the sequence is FNLNLALLAVQSIVCLTAISI. Topologically, residues 57 to 74 are cytoplasmic; sequence GKSFGLCKFRSFNADEAK. The chain crosses the membrane as a helical span at residues 75-97; that stretch reads KWFPIALLLVVMIYTSSKALQFL. The Lumenal segment spans residues 98 to 100; it reads SIP. A helical membrane pass occupies residues 101–123; that stretch reads VYTIFKNLTIILIAYGEVLWFGG. Residues 124-129 lie on the Cytoplasmic side of the membrane; it reads SVTSMA. The helical transmembrane segment at 130-152 threads the bilayer; it reads LASFVLMVLSSVIAAWSDISGAI. Residues 153-163 lie on the Lumenal side of the membrane; that stretch reads AVSGSATTTVT. A helical membrane pass occupies residues 164–184; that stretch reads ALNIGYFWMMSNCFASAAFVL. The Cytoplasmic segment spans residues 185–208; the sequence is YMRKRIKLTNFGDFDTTFYNNLLS. The helical transmembrane segment at 209–229 threads the bilayer; sequence IPVLLIASLLFEDWSPANLAV. Over 230 to 237 the chain is Lumenal; it reads NFPPESRN. Residues 238–258 traverse the membrane as a helical segment; the sequence is LIFFSMVVSGLMSIGISYCSA. Topologically, residues 259–268 are cytoplasmic; sequence WCVRVTSSTT. Residues 269–289 form a helical membrane-spanning segment; sequence YSMVGALNKLPLALSGIVFFG. Topologically, residues 290–291 are lumenal; the sequence is TP. Residues 292 to 312 form a helical membrane-spanning segment; it reads ATFSSVSAIFVGFVAGIVYAV. Residues 313 to 326 lie on the Cytoplasmic side of the membrane; that stretch reads AQIQKKKAEAALPK.

This sequence belongs to the TPT transporter family. SLC35D subfamily. Homooligomer.

It localises to the golgi apparatus membrane. The protein localises to the cytoplasmic vesicle membrane. The protein resides in the endoplasmic reticulum membrane. Functionally, involved in the import of GDP-mannose from the cytoplasm into the Golgi lumen. The polypeptide is GDP-mannose transporter (VRG4) (Yarrowia lipolytica (strain CLIB 122 / E 150) (Yeast)).